The sequence spans 455 residues: Glutamate--tRNA ligase (455 aa).

The 'HIGH' region motif lies at 8–18 (PSPTGYLHIGG). The 'KMSKS' region motif lies at 231-235 (RLSKR). Lys234 contacts ATP.

The protein belongs to the class-I aminoacyl-tRNA synthetase family. Glutamate--tRNA ligase type 1 subfamily. In terms of assembly, monomer.

It is found in the cytoplasm. It catalyses the reaction tRNA(Glu) + L-glutamate + ATP = L-glutamyl-tRNA(Glu) + AMP + diphosphate. In terms of biological role, catalyzes the attachment of glutamate to tRNA(Glu) in a two-step reaction: glutamate is first activated by ATP to form Glu-AMP and then transferred to the acceptor end of tRNA(Glu). The sequence is that of Glutamate--tRNA ligase from Vesicomyosocius okutanii subsp. Calyptogena okutanii (strain HA).